The primary structure comprises 248 residues: Anamorsin homolog (248 aa).

The tract at residues 4–129 (FKGLQKSLYI…ETGSSARLSF (126 aa)) is N-terminal SAM-like domain. The segment at 130-161 (AKKNASAINVWKISGDDEELIDEEELLDEEDK) is linker. The [2Fe-2S] cluster site is built by Cys-172, Cys-181, Cys-184, and Cys-186. The fe-S binding site A stretch occupies residues 172–186 (CSTTGKRKACKNCSC). Positions 209, 212, 220, and 223 each coordinate [4Fe-4S] cluster. Short sequence motifs (cx2C motif) lie at residues 209 to 212 (CGNC) and 220 to 223 (CSTC). The interval 209 to 223 (CGNCYLGDAFRCSTC) is fe-S binding site B.

Belongs to the anamorsin family. Monomer. Requires [2Fe-2S] cluster as cofactor. The cofactor is [4Fe-4S] cluster.

The protein localises to the cytoplasm. The protein resides in the mitochondrion intermembrane space. Component of the cytosolic iron-sulfur (Fe-S) protein assembly (CIA) machinery. Required for the maturation of extramitochondrial Fe-S proteins. Part of an electron transfer chain functioning in an early step of cytosolic Fe-S biogenesis, facilitating the de novo assembly of a [4Fe-4S] cluster on the cytosolic Fe-S scaffold complex. Electrons are transferred from NADPH via a FAD- and FMN-containing diflavin oxidoreductase. Together with the diflavin oxidoreductase, also required for the assembly of the diferric tyrosyl radical cofactor of ribonucleotide reductase (RNR), probably by providing electrons for reduction during radical cofactor maturation in the catalytic small subunit. This is Anamorsin homolog from Drosophila erecta (Fruit fly).